Here is a 735-residue protein sequence, read N- to C-terminus: Rho GTPase-activating protein SYDE1 (735 aa).

3 disordered regions span residues 1–253 (MAEP…PYEV), 601–655 (PDTR…AGDW), and 669–706 (FLSGPDYDHVTGSDSEEDEDESGEPRGTTDFEDEFDAP). Residues 14–47 (RGREKLPRKKSDAKDRGRPAQRSEPKPPEPEPRV) are compositionally biased toward basic and acidic residues. Positions 151–160 (PTKTSRTKSP) are enriched in low complexity. Residues S224, S231, S235, and S244 each carry the phosphoserine modification. The C2 domain occupies 249–366 (RPYEVGPSAR…FRGCQAQQLA (118 aa)). The 207-residue stretch at 398-604 (LPLQLLVERE…YLLQSWPDTR (207 aa)) folds into the Rho-GAP domain. Positions 669–679 (FLSGPDYDHVT) are enriched in basic and acidic residues. A phosphoserine mark is found at S681 and S683.

In terms of processing, palmitoylated. Probably palmitoylated by ZDHHC3 and ZDHHC7.

Its function is as follows. GTPase activator for the Rho-type GTPases. As a GCM1 downstream effector, it is involved in placental development and positively regulates trophoblast cells migration. It regulates cytoskeletal remodeling by controlling the activity of Rho GTPases including RHOA, CDC42 and RAC1. The polypeptide is Rho GTPase-activating protein SYDE1 (Syde1) (Rattus norvegicus (Rat)).